The following is a 311-amino-acid chain: Ribose-phosphate pyrophosphokinase (311 aa).

Residues 34–36 and 93–94 contribute to the ATP site; these read DQE and RQ. Positions 127 and 168 each coordinate Mg(2+). The active site involves Lys191. D-ribose 5-phosphate-binding positions include Arg193, Asp217, and 221–225; that span reads DSGGT.

This sequence belongs to the ribose-phosphate pyrophosphokinase family. Class I subfamily. Homohexamer. The cofactor is Mg(2+).

The protein resides in the cytoplasm. It carries out the reaction D-ribose 5-phosphate + ATP = 5-phospho-alpha-D-ribose 1-diphosphate + AMP + H(+). Its pathway is metabolic intermediate biosynthesis; 5-phospho-alpha-D-ribose 1-diphosphate biosynthesis; 5-phospho-alpha-D-ribose 1-diphosphate from D-ribose 5-phosphate (route I): step 1/1. In terms of biological role, involved in the biosynthesis of the central metabolite phospho-alpha-D-ribosyl-1-pyrophosphate (PRPP) via the transfer of pyrophosphoryl group from ATP to 1-hydroxyl of ribose-5-phosphate (Rib-5-P). This chain is Ribose-phosphate pyrophosphokinase, found in Mesorhizobium japonicum (strain LMG 29417 / CECT 9101 / MAFF 303099) (Mesorhizobium loti (strain MAFF 303099)).